Consider the following 281-residue polypeptide: Bifunctional protein FolD (281 aa).

NADP(+)-binding positions include 165 to 167 (GRG), Thr-192, and Val-233.

Belongs to the tetrahydrofolate dehydrogenase/cyclohydrolase family. In terms of assembly, homodimer.

The enzyme catalyses (6R)-5,10-methylene-5,6,7,8-tetrahydrofolate + NADP(+) = (6R)-5,10-methenyltetrahydrofolate + NADPH. It carries out the reaction (6R)-5,10-methenyltetrahydrofolate + H2O = (6R)-10-formyltetrahydrofolate + H(+). It functions in the pathway one-carbon metabolism; tetrahydrofolate interconversion. Functionally, catalyzes the oxidation of 5,10-methylenetetrahydrofolate to 5,10-methenyltetrahydrofolate and then the hydrolysis of 5,10-methenyltetrahydrofolate to 10-formyltetrahydrofolate. The sequence is that of Bifunctional protein FolD from Mycobacterium tuberculosis (strain ATCC 25177 / H37Ra).